Here is a 125-residue protein sequence, read N- to C-terminus: Small ribosomal subunit protein uS12c (125 aa).

The protein belongs to the universal ribosomal protein uS12 family. In terms of assembly, part of the 30S ribosomal subunit.

It is found in the plastid. Its subcellular location is the chloroplast. Functionally, with S4 and S5 plays an important role in translational accuracy. Located at the interface of the 30S and 50S subunits. The chain is Small ribosomal subunit protein uS12c (rps12) from Tupiella akineta (Green alga).